We begin with the raw amino-acid sequence, 576 residues long: Urease subunit alpha (576 aa).

In terms of domain architecture, Urease spans 132–576 (GGIDTHIHFI…LPMAQRYFLF (445 aa)). Histidine 137, histidine 139, and lysine 220 together coordinate Ni(2+). Lysine 220 carries the post-translational modification N6-carboxylysine. Residue histidine 222 coordinates substrate. Ni(2+)-binding residues include histidine 249 and histidine 275. The active-site Proton donor is histidine 323. Position 363 (aspartate 363) interacts with Ni(2+).

Belongs to the metallo-dependent hydrolases superfamily. Urease alpha subunit family. In terms of assembly, heterotrimer of UreA (gamma), UreB (beta) and UreC (alpha) subunits. Three heterotrimers associate to form the active enzyme. Requires Ni cation as cofactor. Carboxylation allows a single lysine to coordinate two nickel ions.

Its subcellular location is the cytoplasm. The catalysed reaction is urea + 2 H2O + H(+) = hydrogencarbonate + 2 NH4(+). The protein operates within nitrogen metabolism; urea degradation; CO(2) and NH(3) from urea (urease route): step 1/1. This Paenarthrobacter aurescens (strain TC1) protein is Urease subunit alpha.